Reading from the N-terminus, the 402-residue chain is MIVVEKVDKTPVAKRLVEIVERKGQGHPDYIADGISEWVSRYLSRYYLERFGVILHHNVDKTLVVGGQASPRFGGGEVLQPIYILVSGRATSEVRLKDGVVKIPLGPIIIQAARDWIKQHFRYLDPDAHTVIDYKIGQGSADLVGIYDLGVKSVPLANDTSVGVGYAPLTPLEQLVYKTERLLNSRDFKAKYPEVGEDVKVMGVRVGNEVKLTVAAAMISRLVKDKSHYLSVKDDVKKAVEDLASKVAPDYKIDVTINAADKPEHGIFYLTVTGTSAEHGDDGMTGRGNRANGLITPMRSMSLEAAAGKNPVSHVGKIYNVVAQRIADRIYAEAKDIVEVYVEIVSQIGKPINEPKILNIEIIKEGALTGEVKNEAEAIAREELEKITRVTEYILRGEVSLY.

137–142 provides a ligand contact to ATP; the sequence is GQGSAD.

This sequence belongs to the AdoMet synthase 2 family. Requires Mg(2+) as cofactor.

It catalyses the reaction L-methionine + ATP + H2O = S-adenosyl-L-methionine + phosphate + diphosphate. The protein operates within amino-acid biosynthesis; S-adenosyl-L-methionine biosynthesis; S-adenosyl-L-methionine from L-methionine: step 1/1. Functionally, catalyzes the formation of S-adenosylmethionine from methionine and ATP. The sequence is that of S-adenosylmethionine synthase from Pyrobaculum neutrophilum (strain DSM 2338 / JCM 9278 / NBRC 100436 / V24Sta) (Thermoproteus neutrophilus).